We begin with the raw amino-acid sequence, 334 residues long: Large ribosomal subunit protein uL3 (334 aa).

A compositionally biased stretch (basic residues) spans Met1–Arg10. A disordered region spans residues Met1 to Arg20.

It belongs to the universal ribosomal protein uL3 family. In terms of assembly, part of the 50S ribosomal subunit. Forms a cluster with proteins L14 and L24e.

Functionally, one of the primary rRNA binding proteins, it binds directly near the 3'-end of the 23S rRNA, where it nucleates assembly of the 50S subunit. The chain is Large ribosomal subunit protein uL3 from Methanococcus maripaludis (strain C6 / ATCC BAA-1332).